The sequence spans 509 residues: UDP-N-acetylmuramyl-tripeptide synthetase (509 aa).

An ATP-binding site is contributed by 124 to 130 (GTNGKTS). UDP-N-acetyl-alpha-D-muramoyl-L-alanyl-D-glutamate contacts are provided by residues 164-165 (TT), Ser191, and Arg199. Residue Lys231 is modified to N6-carboxylysine.

This sequence belongs to the MurCDEF family. MurE subfamily. Carboxylation is probably crucial for Mg(2+) binding and, consequently, for the gamma-phosphate positioning of ATP.

Its subcellular location is the cytoplasm. The protein operates within cell wall biogenesis; peptidoglycan biosynthesis. Its function is as follows. Catalyzes the addition of an amino acid to the nucleotide precursor UDP-N-acetylmuramoyl-L-alanyl-D-glutamate (UMAG) in the biosynthesis of bacterial cell-wall peptidoglycan. In Tropheryma whipplei (strain Twist) (Whipple's bacillus), this protein is UDP-N-acetylmuramyl-tripeptide synthetase.